A 317-amino-acid polypeptide reads, in one-letter code: Membrane-associated protein VIPP1, chloroplastic (317 aa).

Residues 92–246 (EMNDDLTKMR…SQAEALGQLA (155 aa)) are a coiled coil. Positions 265 to 317 (DLAQMKKEISGSSSKGELPPGRTAVSNSGAARPFRDIEIENELNELRKKANEY) are disordered. The span at 297–317 (PFRDIEIENELNELRKKANEY) shows a compositional bias: basic and acidic residues.

This sequence belongs to the PspA/Vipp/IM30 family. As to quaternary structure, homomultimer. Complex formation involves interaction via the central alpha-helical domain (71-286). (Microbial infection) Interacts with the rice tungro bacilliform virus (RTBV) capsid protein.

It localises to the plastid. Its subcellular location is the chloroplast inner membrane. The protein localises to the chloroplast thylakoid membrane. Functionally, required for plastid vesicle formation and thylakoid membrane biogenesis, but not for functional assembly of thylakoid protein complexes. In Oryza sativa subsp. japonica (Rice), this protein is Membrane-associated protein VIPP1, chloroplastic.